The primary structure comprises 356 residues: Phospho-N-acetylmuramoyl-pentapeptide-transferase (356 aa).

The next 10 membrane-spanning stretches (helical) occupy residues 4–24, 53–73, 76–96, 116–136, 152–172, 186–206, 228–248, 253–273, 278–298, and 333–353; these read ILLA…WFIH, GGAV…LVTW, PSIS…IGFL, LLGQ…FPDV, ISWL…LIAG, LATG…IWQF, DIAV…WWNA, IFLG…MAVV, LLLV…MLQV, and FWII…AEWV.

Belongs to the glycosyltransferase 4 family. MraY subfamily. Mg(2+) is required as a cofactor.

Its subcellular location is the cell membrane. The catalysed reaction is UDP-N-acetyl-alpha-D-muramoyl-L-alanyl-gamma-D-glutamyl-meso-2,6-diaminopimeloyl-D-alanyl-D-alanine + di-trans,octa-cis-undecaprenyl phosphate = di-trans,octa-cis-undecaprenyl diphospho-N-acetyl-alpha-D-muramoyl-L-alanyl-D-glutamyl-meso-2,6-diaminopimeloyl-D-alanyl-D-alanine + UMP. It participates in cell wall biogenesis; peptidoglycan biosynthesis. Functionally, catalyzes the initial step of the lipid cycle reactions in the biosynthesis of the cell wall peptidoglycan: transfers peptidoglycan precursor phospho-MurNAc-pentapeptide from UDP-MurNAc-pentapeptide onto the lipid carrier undecaprenyl phosphate, yielding undecaprenyl-pyrophosphoryl-MurNAc-pentapeptide, known as lipid I. The polypeptide is Phospho-N-acetylmuramoyl-pentapeptide-transferase (Cutibacterium acnes (strain DSM 16379 / KPA171202) (Propionibacterium acnes)).